We begin with the raw amino-acid sequence, 447 residues long: Cysteine--tRNA ligase (447 aa).

A Zn(2+)-binding site is contributed by Cys-28. The short motif at 30-40 (PTVYNYIHIGN) is the 'HIGH' region element. Zn(2+) is bound by residues Cys-211, His-236, and Glu-240. The short motif at 268-272 (KMSKS) is the 'KMSKS' region element. Position 271 (Lys-271) interacts with ATP.

Belongs to the class-I aminoacyl-tRNA synthetase family. In terms of assembly, monomer. Zn(2+) is required as a cofactor.

Its subcellular location is the cytoplasm. The catalysed reaction is tRNA(Cys) + L-cysteine + ATP = L-cysteinyl-tRNA(Cys) + AMP + diphosphate. The polypeptide is Cysteine--tRNA ligase (Streptococcus pyogenes serotype M28 (strain MGAS6180)).